Consider the following 230-residue polypeptide: Magnesium-protoporphyrin O-methyltransferase (230 aa).

This sequence belongs to the class I-like SAM-binding methyltransferase superfamily. Magnesium protoporphyrin O-methyltransferase family.

It catalyses the reaction Mg-protoporphyrin IX + S-adenosyl-L-methionine = Mg-protoporphyrin IX 13-monomethyl ester + S-adenosyl-L-homocysteine. It functions in the pathway porphyrin-containing compound metabolism; chlorophyll biosynthesis (light-independent). Its function is as follows. Converts Mg-protoporphyrin IX to Mg-protoporphyrin IX methylester using S-adenosyl-L-methionine as a cofactor. This is Magnesium-protoporphyrin O-methyltransferase (chlM) from Synechocystis sp. (strain ATCC 27184 / PCC 6803 / Kazusa).